The chain runs to 627 residues: Zinc finger MYM-type protein 5 (627 aa).

Residues 1-23 (MEAHLADMESSGGPTSSLAGTSR) are disordered. Residues 12 to 23 (GGPTSSLAGTSR) are compositionally biased toward polar residues. A Glycyl lysine isopeptide (Lys-Gly) (interchain with G-Cter in SUMO2) cross-link involves residue lysine 59. Residues 91-123 (DDEGDTDTNGGEEKNPTDFIEWGPNGNKSSTKN) form a disordered region. Glycyl lysine isopeptide (Lys-Gly) (interchain with G-Cter in SUMO2) cross-links involve residues lysine 137 and lysine 195. The MYM-type 1 zinc finger occupies 234-268 (HLFCSTTCLSSFSHKRTRKTRNVMCKKDSPVRTTT). The segment at 280–319 (QGFYNASLSPYENCQSLRKEVFTKSRCIICNKLGEVRHEI) adopts an MYM-type 2; degenerate zinc-finger fold. 2 MYM-type zinc fingers span residues 326–354 (HKLCSNNCFNEYRLTNGLIMNCCEQCSKY) and 370–396 (KRFCCQNCADEYKEIMEAKSKLLLLQN). The tract at residues 405-429 (ENEKRLRESSGTLSGNTGDIPEKKE) is disordered. Residues lysine 408, lysine 427, and lysine 517 each participate in a glycyl lysine isopeptide (Lys-Gly) (interchain with G-Cter in SUMO2) cross-link.

As to quaternary structure, interacts (via N-terminal 120 amino acid region) with ETV5 (via C-terminal).

It is found in the nucleus. Its function is as follows. Functions as a transcriptional regulator. The sequence is that of Zinc finger MYM-type protein 5 (Zmym5) from Mus musculus (Mouse).